Reading from the N-terminus, the 245-residue chain is Ubiquinone/menaquinone biosynthesis C-methyltransferase UbiE (245 aa).

Residues Thr-71, Asp-92, and 118–119 (DA) contribute to the S-adenosyl-L-methionine site.

It belongs to the class I-like SAM-binding methyltransferase superfamily. MenG/UbiE family.

It carries out the reaction a 2-demethylmenaquinol + S-adenosyl-L-methionine = a menaquinol + S-adenosyl-L-homocysteine + H(+). It catalyses the reaction a 2-methoxy-6-(all-trans-polyprenyl)benzene-1,4-diol + S-adenosyl-L-methionine = a 5-methoxy-2-methyl-3-(all-trans-polyprenyl)benzene-1,4-diol + S-adenosyl-L-homocysteine + H(+). It participates in quinol/quinone metabolism; menaquinone biosynthesis; menaquinol from 1,4-dihydroxy-2-naphthoate: step 2/2. It functions in the pathway cofactor biosynthesis; ubiquinone biosynthesis. Its function is as follows. Methyltransferase required for the conversion of demethylmenaquinol (DMKH2) to menaquinol (MKH2) and the conversion of 2-polyprenyl-6-methoxy-1,4-benzoquinol (DDMQH2) to 2-polyprenyl-3-methyl-6-methoxy-1,4-benzoquinol (DMQH2). The polypeptide is Ubiquinone/menaquinone biosynthesis C-methyltransferase UbiE (Neisseria meningitidis serogroup B (strain ATCC BAA-335 / MC58)).